Reading from the N-terminus, the 182-residue chain is Large ribosomal subunit protein uL10 (182 aa).

This sequence belongs to the universal ribosomal protein uL10 family. Part of the ribosomal stalk of the 50S ribosomal subunit. The N-terminus interacts with L11 and the large rRNA to form the base of the stalk. The C-terminus forms an elongated spine to which L12 dimers bind in a sequential fashion forming a multimeric L10(L12)X complex.

Functionally, forms part of the ribosomal stalk, playing a central role in the interaction of the ribosome with GTP-bound translation factors. In Chloroflexus aurantiacus (strain ATCC 29364 / DSM 637 / Y-400-fl), this protein is Large ribosomal subunit protein uL10.